A 575-amino-acid polypeptide reads, in one-letter code: Transcription factor ncaA (575 aa).

Polar residues-rich tracts occupy residues 1–15 and 22–34; these read MAETTPSRPNDTPEN and DNQSQSAGQSKNP. Disordered regions lie at residues 1 to 40 and 79 to 114; these read MAETTPSRPNDTPENSPGGGDDNQSQSAGQSKNPASVKDR and IRSGITRRQARTSSGKRDTPERAMGKGPSEHFAGGE. Residues 39-66 form a UBZ4-type; degenerate zinc finger; it reads DRKCQYCHQAFTSSSLGRHLDQYLFKKK. The span at 93 to 102 shows a compositional bias: basic and acidic residues; it reads GKRDTPERAM. A coiled-coil region spans residues 337 to 371; sequence FAREVEKRKTLDEQLARVQQEANQLRAQVEKLGSC. Residues 429–575 form a disordered region; sequence GRVGVGYGNP…ASGPPPSSGA (147 aa). Basic and acidic residues predominate over residues 440 to 454; the sequence is LDDRSSADTKARATE. Low complexity predominate over residues 455–471; the sequence is EPPASAALASTSTSAPP. Residues 472-485 are compositionally biased toward pro residues; it reads SAHPPPRALQPAPG. Composition is skewed to polar residues over residues 493 to 513 and 538 to 558; these read DQSSSHTGGASAPSSQNTSPY and SAANPSATAPNTWNPHSHQSL.

In terms of assembly, interacts with atrR.

It is found in the nucleus. Functionally, transcription factor required for normal voriconazole resistance. Contributes to the function of atrR and regulates the expression of the atrR target gene abcG1. The sequence is that of Transcription factor ncaA from Aspergillus fumigatus (strain ATCC MYA-4609 / CBS 101355 / FGSC A1100 / Af293) (Neosartorya fumigata).